The chain runs to 361 residues: D-alanine--D-alanine ligase (361 aa).

An ATP-grasp domain is found at 144–350 (KLAAADAGLA…FMELTDRLIR (207 aa)). An ATP-binding site is contributed by 177 to 232 (VASLSFPMFVKPVSLGSSVGITKVNSESELAEAITHACSLDSKVLIEQAVKGREVE). Asp303, Glu317, and Asn319 together coordinate Mg(2+).

It belongs to the D-alanine--D-alanine ligase family. Requires Mg(2+) as cofactor. Mn(2+) serves as cofactor.

The protein localises to the cytoplasm. It carries out the reaction 2 D-alanine + ATP = D-alanyl-D-alanine + ADP + phosphate + H(+). Its pathway is cell wall biogenesis; peptidoglycan biosynthesis. In terms of biological role, cell wall formation. The chain is D-alanine--D-alanine ligase from Chlorobium luteolum (strain DSM 273 / BCRC 81028 / 2530) (Pelodictyon luteolum).